A 348-amino-acid chain; its full sequence is tRNA pseudouridine synthase D (348 aa).

Aspartate 84 functions as the Nucleophile in the catalytic mechanism. The TRUD domain maps to 162-308 (GVPNYFGPQR…ARMDRRPLCL (147 aa)).

This sequence belongs to the pseudouridine synthase TruD family.

It carries out the reaction uridine(13) in tRNA = pseudouridine(13) in tRNA. Its function is as follows. Responsible for synthesis of pseudouridine from uracil-13 in transfer RNAs. This chain is tRNA pseudouridine synthase D, found in Chromohalobacter salexigens (strain ATCC BAA-138 / DSM 3043 / CIP 106854 / NCIMB 13768 / 1H11).